Consider the following 372-residue polypeptide: Queuine tRNA-ribosyltransferase (372 aa).

Residue Asp-92 is the Proton acceptor of the active site. Residues 92-96 (DSGGY), Asp-146, Gln-188, and Gly-215 each bind substrate. Residues 246-252 (GIGTIRE) form an RNA binding region. Catalysis depends on Asp-265, which acts as the Nucleophile. The interval 270–274 (TRLGR) is RNA binding; important for wobble base 34 recognition. Zn(2+)-binding residues include Cys-303, Cys-305, Cys-308, and His-334.

It belongs to the queuine tRNA-ribosyltransferase family. Homodimer. Within each dimer, one monomer is responsible for RNA recognition and catalysis, while the other monomer binds to the replacement base PreQ1. It depends on Zn(2+) as a cofactor.

The catalysed reaction is 7-aminomethyl-7-carbaguanine + guanosine(34) in tRNA = 7-aminomethyl-7-carbaguanosine(34) in tRNA + guanine. It functions in the pathway tRNA modification; tRNA-queuosine biosynthesis. Its function is as follows. Catalyzes the base-exchange of a guanine (G) residue with the queuine precursor 7-aminomethyl-7-deazaguanine (PreQ1) at position 34 (anticodon wobble position) in tRNAs with GU(N) anticodons (tRNA-Asp, -Asn, -His and -Tyr). Catalysis occurs through a double-displacement mechanism. The nucleophile active site attacks the C1' of nucleotide 34 to detach the guanine base from the RNA, forming a covalent enzyme-RNA intermediate. The proton acceptor active site deprotonates the incoming PreQ1, allowing a nucleophilic attack on the C1' of the ribose to form the product. After dissociation, two additional enzymatic reactions on the tRNA convert PreQ1 to queuine (Q), resulting in the hypermodified nucleoside queuosine (7-(((4,5-cis-dihydroxy-2-cyclopenten-1-yl)amino)methyl)-7-deazaguanosine). This is Queuine tRNA-ribosyltransferase from Prochlorococcus marinus (strain SARG / CCMP1375 / SS120).